Reading from the N-terminus, the 357-residue chain is N-methyltransferase dtpB (357 aa).

Belongs to the methyltransferase superfamily.

It participates in alkaloid biosynthesis. Its function is as follows. N-methyltransferase; part of the gene cluster that mediates the biosynthesis of the dimeric diketopiperazine alkaloid ditryptophenaline. The nonribosomal peptide synthase dtpA accepts L-tryptophan and L-phenylalanine as its substrates and forms the phenylalanyl-tryptophanyl cyclic dipeptide product cyclophenylalanyltryptophenyl. The N-methyltransferase dtpB is responsible for the N-methylation of cyclophenylalanyltryptophenyl to yield cyclo-N-methylphenylalanyltryptophenyl. The cytochrome P450 monooxygenase is responsible not only for pyrroloindole ring formation but also for concurrent dimerization of N-methylphenylalanyltryptophanyl diketopiperazine monomers into a homodimeric product. The chain is N-methyltransferase dtpB from Aspergillus flavus (strain ATCC 200026 / FGSC A1120 / IAM 13836 / NRRL 3357 / JCM 12722 / SRRC 167).